Here is a 232-residue protein sequence, read N- to C-terminus: Large ribosomal subunit protein uL1 (232 aa).

This sequence belongs to the universal ribosomal protein uL1 family. As to quaternary structure, part of the 50S ribosomal subunit.

Its function is as follows. Binds directly to 23S rRNA. The L1 stalk is quite mobile in the ribosome, and is involved in E site tRNA release. Functionally, protein L1 is also a translational repressor protein, it controls the translation of the L11 operon by binding to its mRNA. The sequence is that of Large ribosomal subunit protein uL1 from Ruegeria pomeroyi (strain ATCC 700808 / DSM 15171 / DSS-3) (Silicibacter pomeroyi).